The following is a 91-amino-acid chain: Conotoxin VnMKLT1-021 (91 aa).

The first 22 residues, Met1–Ala22, serve as a signal peptide directing secretion. Positions Asp23–Arg57 are excised as a propeptide. Intrachain disulfides connect Cys59/Cys78, Cys66/Cys82, and Cys77/Cys86.

This sequence belongs to the conotoxin O1 superfamily. In terms of tissue distribution, expressed by the venom duct.

The protein localises to the secreted. The polypeptide is Conotoxin VnMKLT1-021 (Conus ventricosus (Mediterranean cone)).